Here is a 127-residue protein sequence, read N- to C-terminus: Glycine cleavage system H protein (127 aa).

The Lipoyl-binding domain maps to 24-105; it reads TALVGITDFA…YGEGWMVKMK (82 aa). Lysine 65 carries the N6-lipoyllysine modification.

This sequence belongs to the GcvH family. In terms of assembly, the glycine cleavage system is composed of four proteins: P, T, L and H. Requires (R)-lipoate as cofactor.

The glycine cleavage system catalyzes the degradation of glycine. The H protein shuttles the methylamine group of glycine from the P protein to the T protein. In Chlorobium phaeovibrioides (strain DSM 265 / 1930) (Prosthecochloris vibrioformis (strain DSM 265)), this protein is Glycine cleavage system H protein.